The sequence spans 151 residues: FUN14 domain-containing protein 2 (151 aa).

The Cytoplasmic portion of the chain corresponds to 1–42; that stretch reads MAANSQGNFDGKFEALDLAELTKKQPWWRKLFGQESGPSAEK. Residues 43-63 traverse the membrane as a helical segment; the sequence is YSVATQLVIGGVTGWCTGFVF. Residues 64 to 69 lie on the Mitochondrial intermembrane side of the membrane; it reads QKVGKL. A helical transmembrane segment spans residues 70–90; that stretch reads AATAVGGGFFLLQLANHTGYI. Residues 91 to 126 are Cytoplasmic-facing; the sequence is KVDWQRVEKDMKKAKEQLKIRKNKQIPTEVKSKAEE. The helical transmembrane segment at 127-147 threads the bilayer; that stretch reads VVSFVKKNVLVTGGFFGGFLL. Residues 148–151 lie on the Mitochondrial intermembrane side of the membrane; it reads GMAS.

This sequence belongs to the FUN14 family. Highly expressed in platelet (at protein level). Expressed in liver, brain, heart and muscle.

The protein localises to the mitochondrion outer membrane. Its subcellular location is the nucleus. Functionally, binds directly and specifically 1,2-Diacyl-sn-glycero-3-phospho-(1'-myo-inositol-3',4',5'-bisphosphate) (PIP3) leading to the recruitment of PIP3 to mitochondria and may play a role in the regulation of the platelet activation via AKT/GSK3B/cGMP signaling pathways. May act as transcription factor that regulates SREBP1 (isoform SREBP-1C) expression in order to modulate triglyceride (TG) homeostasis in hepatocytes. The sequence is that of FUN14 domain-containing protein 2 from Mus musculus (Mouse).